Reading from the N-terminus, the 221-residue chain is Putative gene 53 protein (221 aa).

The polypeptide is Putative gene 53 protein (53) (Bacillus phage SP01 (Bacteriophage SP01)).